Here is an 800-residue protein sequence, read N- to C-terminus: Kolavenyl diphosphate synthase TPS5, chloroplastic (800 aa).

Residues 1 to 75 constitute a chloroplast transit peptide; sequence MSLAYSQATS…VILTAEKSVD (75 aa). Residue lysine 244 participates in substrate binding. 2 residues coordinate Mg(2+): aspartate 375 and aspartate 377. The short motif at 375-378 is the DXDD motif element; that stretch reads DVDD. A substrate-binding site is contributed by lysine 461.

It belongs to the terpene synthase family. Requires Mg(2+) as cofactor. As to expression, mostly expressed in trichomes of leaves and fruits.

The protein localises to the plastid. The protein resides in the chloroplast. It carries out the reaction (2E,6E,10E)-geranylgeranyl diphosphate = (+)-kolavenyl diphosphate. It participates in secondary metabolite biosynthesis; terpenoid biosynthesis. Its function is as follows. Involved in the biosynthesis of labdane-type diterpenoid including cleroda-dienols, and peregrinol lactones and furan derivatives, dopaminergic diterpenoids that can bind to dopamine receptors in the human pituitary gland, have probably ability to lower prolactin levels, and are used to treat menstrual cycle disorders (e.g. premenstrual syndrome and mastodynia). Terpene synthase that produces kolavenyl diphosphate from geranylgeranyl diphosphate (GGPP). This Vitex agnus-castus (Chaste tree) protein is Kolavenyl diphosphate synthase TPS5, chloroplastic.